Consider the following 530-residue polypeptide: AP-4 complex subunit mu (530 aa).

A disordered region spans residues 164–187; sequence PKQGVKPIHSGSKNSSSGGSSLST. Positions 173 to 186 are enriched in low complexity; the sequence is SGSKNSSSGGSSLS. Residues 227–527 enclose the MHD domain; it reads DNEIYIDLCE…ITDSKSFVSR (301 aa).

It belongs to the adaptor complexes medium subunit family. In terms of assembly, may be part of the adaptor protein complex 4 (AP-4), a heterotetramer composed of two large adaptins (epsilon-type subunitand beta-type subunit), a medium adaptin (mu-type subunit) and a small adaptin (sigma-type).

Its subcellular location is the golgi apparatus. The protein localises to the trans-Golgi network membrane. It localises to the early endosome. Probable component of an adaptor protein complex. Adaptor protein complexes are vesicle coat components involved both in vesicle formation and cargo selection. They control the vesicular transport of proteins in different trafficking pathways. The chain is AP-4 complex subunit mu (apm4) from Dictyostelium discoideum (Social amoeba).